A 219-amino-acid chain; its full sequence is Proteasome subunit beta (219 aa).

Positions 1 to 14 (MISNSEYHKEYMKG) are cleaved as a propeptide — removed in mature form; by autocatalysis. Residue T15 is the Nucleophile of the active site.

The protein belongs to the peptidase T1B family. As to quaternary structure, the 20S proteasome core is composed of 14 alpha and 14 beta subunits that assemble into four stacked heptameric rings, resulting in a barrel-shaped structure. The two inner rings, each composed of seven catalytic beta subunits, are sandwiched by two outer rings, each composed of seven alpha subunits. The catalytic chamber with the active sites is on the inside of the barrel. Has a gated structure, the ends of the cylinder being occluded by the N-termini of the alpha-subunits. Is capped at one or both ends by the proteasome regulatory ATPase, PAN.

It localises to the cytoplasm. The catalysed reaction is Cleavage of peptide bonds with very broad specificity.. Its activity is regulated as follows. The formation of the proteasomal ATPase PAN-20S proteasome complex, via the docking of the C-termini of PAN into the intersubunit pockets in the alpha-rings, triggers opening of the gate for substrate entry. Interconversion between the open-gate and close-gate conformations leads to a dynamic regulation of the 20S proteasome proteolysis activity. Functionally, component of the proteasome core, a large protease complex with broad specificity involved in protein degradation. In Methanococcus maripaludis (strain C6 / ATCC BAA-1332), this protein is Proteasome subunit beta.